The chain runs to 156 residues: MPRRRRIEPRKILPDPKFGSELLAKFINVLMVDGKKSIAESIVYGALETLSQRTGKEALEAFEIALENVRPTVEVKSRRVGGSTYQVPVEVRPTRRNALGMRWIVEAARKRGDKSMALRLANELSDASENKGAAVKKREDVHRMAEANKAFAHYRW.

It belongs to the universal ribosomal protein uS7 family. Part of the 30S ribosomal subunit. Contacts proteins S9 and S11.

Functionally, one of the primary rRNA binding proteins, it binds directly to 16S rRNA where it nucleates assembly of the head domain of the 30S subunit. Is located at the subunit interface close to the decoding center, probably blocks exit of the E-site tRNA. This is Small ribosomal subunit protein uS7 from Histophilus somni (strain 129Pt) (Haemophilus somnus).